Consider the following 325-residue polypeptide: Elongation factor P--(R)-beta-lysine ligase (325 aa).

Residue Ser-76–Glu-78 coordinates substrate. ATP is bound by residues Arg-100 to Glu-102 and Asn-109. Substrate is bound at residue Tyr-118. Residue Glu-244–Leu-245 coordinates ATP. Glu-251 contributes to the substrate binding site. ATP is bound at residue Gly-300.

It belongs to the class-II aminoacyl-tRNA synthetase family. EpmA subfamily. As to quaternary structure, homodimer.

The enzyme catalyses D-beta-lysine + L-lysyl-[protein] + ATP = N(6)-((3R)-3,6-diaminohexanoyl)-L-lysyl-[protein] + AMP + diphosphate + H(+). In terms of biological role, with EpmB is involved in the beta-lysylation step of the post-translational modification of translation elongation factor P (EF-P). Catalyzes the ATP-dependent activation of (R)-beta-lysine produced by EpmB, forming a lysyl-adenylate, from which the beta-lysyl moiety is then transferred to the epsilon-amino group of a conserved specific lysine residue in EF-P. This chain is Elongation factor P--(R)-beta-lysine ligase, found in Pectobacterium atrosepticum (strain SCRI 1043 / ATCC BAA-672) (Erwinia carotovora subsp. atroseptica).